A 353-amino-acid chain; its full sequence is uncharacterized protein (353 aa).

Positions 1–23 are cleaved as a signal peptide; sequence MSAGKGLLLVICLLFLPLKSAMA.

To E.coli YqiI.

In terms of biological role, may be involved in a fimbrial system chaperoned by YbgP and exported by YbgQ. This is an uncharacterized protein from Escherichia coli (strain K12).